The chain runs to 195 residues: CASP-like protein 1B1 (195 aa).

At 1-22 (MGLQNEEKLELGCTGLQPKPKK) the chain is on the cytoplasmic side. Residues 23–43 (WVLLMVRVVAFLATAAATLVM) form a helical membrane-spanning segment. Over 44–75 (ALNKETKTLVVATVGNTPIKVTLTAKFQHTPA) the chain is Extracellular. Residues 76–96 (FVFFVIANGMASFHNLLMIMV) form a helical membrane-spanning segment. Over 97-109 (ELCGQKLDYKGMR) the chain is Cytoplasmic. A helical transmembrane segment spans residues 110–130 (LAMVAILDMMTVALVSGGASA). Over 131–163 (ATFMAELGKNGNSHARWDKICDKFETFCDHGGA) the chain is Extracellular. The chain crosses the membrane as a helical span at residues 164–184 (ALIASSAGLILMMIISVMSIM). The Cytoplasmic portion of the chain corresponds to 185-195 (KLLIKPKSDSS).

Belongs to the Casparian strip membrane proteins (CASP) family. Homodimer and heterodimers.

Its subcellular location is the cell membrane. This is CASP-like protein 1B1 from Populus trichocarpa (Western balsam poplar).